We begin with the raw amino-acid sequence, 282 residues long: Small ribosomal subunit protein uS3 (282 aa).

Positions 43–111 (IRRLMSKGME…QVQLNILEVK (69 aa)) constitute a KH type-2 domain. The disordered stretch occupies residues 217 to 282 (AQSQAAAPRA…IGKGSNGTEA (66 aa)). Residues 228-240 (RRNERGDRPDRGA) are compositionally biased toward basic and acidic residues. A compositionally biased stretch (low complexity) spans 256–269 (AVATGSAPTGTAAT).

This sequence belongs to the universal ribosomal protein uS3 family. As to quaternary structure, part of the 30S ribosomal subunit. Forms a tight complex with proteins S10 and S14.

Binds the lower part of the 30S subunit head. Binds mRNA in the 70S ribosome, positioning it for translation. This is Small ribosomal subunit protein uS3 from Kineococcus radiotolerans (strain ATCC BAA-149 / DSM 14245 / SRS30216).